Consider the following 312-residue polypeptide: Glyoxylate/hydroxypyruvate reductase A (312 aa).

R227 is a catalytic residue. H275 (proton donor) is an active-site residue.

The protein belongs to the D-isomer specific 2-hydroxyacid dehydrogenase family. GhrA subfamily.

It localises to the cytoplasm. The catalysed reaction is glycolate + NADP(+) = glyoxylate + NADPH + H(+). The enzyme catalyses (R)-glycerate + NAD(+) = 3-hydroxypyruvate + NADH + H(+). It carries out the reaction (R)-glycerate + NADP(+) = 3-hydroxypyruvate + NADPH + H(+). Catalyzes the NADPH-dependent reduction of glyoxylate and hydroxypyruvate into glycolate and glycerate, respectively. This is Glyoxylate/hydroxypyruvate reductase A from Escherichia coli (strain ATCC 8739 / DSM 1576 / NBRC 3972 / NCIMB 8545 / WDCM 00012 / Crooks).